We begin with the raw amino-acid sequence, 1326 residues long: F-box/WD repeat-containing protein 7 (1326 aa).

6 disordered regions span residues 1 to 58 (MERG…AEVG), 123 to 187 (DSSS…IEDE), 318 to 351 (TVSN…ALSR), 399 to 549 (GSKA…SGCS), 615 to 642 (RSNP…RNGS), and 797 to 843 (TPRS…NPPP). Residues 9-39 (SSESVTSAGERTQSAVTSSTSTWVKSQASTS) are compositionally biased toward polar residues. Over residues 165-187 (NDDDDDEEPEPEEDDEEELIEDE) the composition is skewed to acidic residues. A compositionally biased stretch (low complexity) spans 320-348 (SNPSPAASANAAAPEEASTSNSSSTSSSA). Over residues 403-464 (ANGSGTANSD…KLNLGSSLGA (62 aa)) the composition is skewed to polar residues. Positions 465–486 (SSCSQHRSGSSSTSKSMESSTS) are enriched in low complexity. Residues 495 to 504 (VYTNTNSNDY) are compositionally biased toward polar residues. 3 stretches are compositionally biased toward low complexity: residues 510 to 520 (TTSGSSTSGGS), 528 to 546 (NVSA…SQES), and 616 to 631 (SNPP…GANP). Composition is skewed to polar residues over residues 632 to 642 (TASVRQRRNGS) and 797 to 824 (TPRS…STPG). Phosphothreonine is present on T813. S825 carries the post-translational modification Phosphoserine. The F-box domain occupies 889 to 935 (RDFISLLPRELALFVLSYLEPKDLLRAAQTCRSWRFLCDDNLLWKEK). WD repeat units follow at residues 992-1030 (GHDD…CLRT), 1033-1070 (GHTG…CVHT), 1073-1110 (GHTS…CLHV), 1113-1150 (GHLA…CLHT), 1153-1190 (GHTN…CKHT), 1193-1232 (GHQS…QTLS), and 1236-1273 (KHHS…FIRN).

Part of a SCF E3 ubiquitin-protein ligase complex. Interacts with Myc and puf. Interacts with CycE. Expressed in follicle cell epithelium and imaginal disks, particularly in the morphogenetic furrow.

The protein localises to the nucleus. Its pathway is protein modification; protein ubiquitination. Its function is as follows. Substrate recognition component of a SCF (SKP1-CUL1-F-box protein) E3 ubiquitin-protein ligase complex which mediates the ubiquitination and subsequent proteasomal degradation of target proteins. Probably recognizes and binds to phosphorylated target proteins. In the wing and eye, negatively regulates cell growth and proliferation by mediating the degradation of Myc and cyclin E, respectively. Required for endocycles, but not mitosis in follicle cell epithelium. In Drosophila melanogaster (Fruit fly), this protein is F-box/WD repeat-containing protein 7.